The primary structure comprises 188 residues: dCTP deaminase (188 aa).

DCTP contacts are provided by residues 111-116 (KSTYAR), 135-137 (TLE), Gln-156, Tyr-170, and Gln-180. Catalysis depends on Glu-137, which acts as the Proton donor/acceptor.

Belongs to the dCTP deaminase family. In terms of assembly, homotrimer.

It carries out the reaction dCTP + H2O + H(+) = dUTP + NH4(+). It functions in the pathway pyrimidine metabolism; dUMP biosynthesis; dUMP from dCTP (dUTP route): step 1/2. Functionally, catalyzes the deamination of dCTP to dUTP. This is dCTP deaminase from Herminiimonas arsenicoxydans.